A 147-amino-acid chain; its full sequence is Phage-like element PBSX protein XkdM (147 aa).

It to B.subtilis YqbM.

The chain is Phage-like element PBSX protein XkdM (xkdM) from Bacillus subtilis (strain 168).